The following is a 194-amino-acid chain: CASP-like protein 4D1 (194 aa).

Over 1-10 (MASRTVLLPS) the chain is Cytoplasmic. A helical membrane pass occupies residues 11 to 31 (AVLILRLLSLGLLAASLALIA). At 32 to 55 (ADKLNVDSDPPQRYTFRDVYAYRY) the chain is on the extracellular side. Residues 56–76 (VLAVAVIGCAYTLLQLPLAAV) form a helical membrane-spanning segment. The Cytoplasmic segment spans residues 77–94 (SIIASGNNKRGIGAGGGS). Residues 95 to 115 (VAVALLVLVLLADVVFALLLA) traverse the membrane as a helical segment. Over 116–161 (TGAAAGFAFTYDVKRYLDGQFDDDSIGTPEVDKLHRDMDKFFDLAY) the chain is Extracellular. A helical membrane pass occupies residues 162–182 (AAAGLMLAAAACMALVIMLSV). Topologically, residues 183-194 (YSLARQVRSDYI) are cytoplasmic.

This sequence belongs to the Casparian strip membrane proteins (CASP) family. In terms of assembly, homodimer and heterodimers.

It localises to the cell membrane. The sequence is that of CASP-like protein 4D1 from Sorghum bicolor (Sorghum).